The primary structure comprises 376 residues: Cytochrome-c peroxidase IdrP1 (376 aa).

The signal sequence occupies residues 1 to 24 (MGHIRSIRLALAVAAVCTAASAAA). Cytochrome c domains follow at residues 49–157 (DKVA…AAFK) and 203–354 (AEAQ…EALS). Heme c contacts are provided by Cys71, Cys74, His75, Cys218, Cys221, and His222.

The iodate reductase (Idr) complex is composed of a molybdopterin-dependent iodate reductase (IdrA and IdrB subunits) and two associated peroxidases (IdrP1 and IdrP2). The cofactor is heme c.

It is found in the periplasm. The catalysed reaction is 2 Fe(II)-[cytochrome c] + H2O2 + 2 H(+) = 2 Fe(III)-[cytochrome c] + 2 H2O. Involved in iodate respiration. May play a critical role in detoxification of inadvertent H(2)O(2) generated by the iodate reductase IdrA/IdrB. The chain is Cytochrome-c peroxidase IdrP1 from Denitromonas iodatirespirans.